Reading from the N-terminus, the 163-residue chain is Anaerobic nitrite reductase HB1 (163 aa).

Residues 8–157 (VFTEEQEALV…LVAAIKIEMK (150 aa)) form the Globin domain. The Homodimerization signature appears at 41–45 (EIAPS). Positions 51, 65, 69, 99, 103, and 104 each coordinate heme b. The Homodimerization motif lies at 111-123 (DEHFEVTKFALLE).

Belongs to the plant globin family. Homodimer. The cofactor is heme b.

The protein resides in the cytoplasm. It localises to the nucleus. The catalysed reaction is Fe(III)-heme b-[protein] + nitric oxide + H2O = Fe(II)-heme b-[protein] + nitrite + 2 H(+). In terms of biological role, phytoglobin that reduces nitrite to nitric oxide (NO) under anoxic conditions (e.g. during flooding or in waterlogged soil). May not function as an oxygen storage or transport protein. Has an unusually high affinity for O(2) through an hexacoordinate heme iron because of a very low dissociation constant. The protein is Anaerobic nitrite reductase HB1 of Gossypium hirsutum (Upland cotton).